An 84-amino-acid polypeptide reads, in one-letter code: Cell division topological specificity factor (84 aa).

It belongs to the MinE family.

In terms of biological role, prevents the cell division inhibition by proteins MinC and MinD at internal division sites while permitting inhibition at polar sites. This ensures cell division at the proper site by restricting the formation of a division septum at the midpoint of the long axis of the cell. This is Cell division topological specificity factor from Chromohalobacter salexigens (strain ATCC BAA-138 / DSM 3043 / CIP 106854 / NCIMB 13768 / 1H11).